Here is a 349-residue protein sequence, read N- to C-terminus: tRNA pseudouridine synthase D (349 aa).

A substrate-binding site is contributed by phenylalanine 27. Catalysis depends on aspartate 80, which acts as the Nucleophile. Asparagine 129 contacts substrate. Positions 155–303 (GVPNYFGAQR…VEAARRAMLL (149 aa)) constitute a TRUD domain. Phenylalanine 329 is a binding site for substrate.

It belongs to the pseudouridine synthase TruD family.

The catalysed reaction is uridine(13) in tRNA = pseudouridine(13) in tRNA. In terms of biological role, responsible for synthesis of pseudouridine from uracil-13 in transfer RNAs. In Citrobacter koseri (strain ATCC BAA-895 / CDC 4225-83 / SGSC4696), this protein is tRNA pseudouridine synthase D.